A 411-amino-acid chain; its full sequence is Prostaglandin E2 receptor EP3 subtype (411 aa).

Residues 1 to 49 (MKETRGDGGSAPFCTRLNHSYPGMWAPEARGNLTRPPGPGEDCGSVSVA) lie on the Extracellular side of the membrane. N-linked (GlcNAc...) asparagine glycans are attached at residues asparagine 18 and asparagine 32. A helical transmembrane segment spans residues 50 to 74 (FPITMLITGFVGNALAMLLVSRSYR). At 75–87 (RRESKRKKSFLLC) the chain is on the cytoplasmic side. The helical transmembrane segment at 88–108 (IGWLALTDLVGQLLTSPVVIL) threads the bilayer. Residues 109–127 (VYLSKQRWEQLDPSGRLCT) lie on the Extracellular side of the membrane. Cysteine 126 and cysteine 204 are disulfide-bonded. A helical membrane pass occupies residues 128–149 (FFGLTMTVFGLSSLFIASAMAV). Topologically, residues 150–171 (ERALAIRAPHWYASHMKTRATR) are cytoplasmic. A helical transmembrane segment spans residues 172–193 (AVLLGVWLAVLAFALLPVLGVG). Over 194 to 223 (QYTIQWPGTWCFISTGRGDNGTSSSHNWGN) the chain is Extracellular. An N-linked (GlcNAc...) asparagine glycan is attached at asparagine 213. Residues 224 to 249 (LFFASTFAFLGLLALAITFTCNLATI) form a helical membrane-spanning segment. Residues 250-279 (KALVSRCRAKAAASQSSAQWGRITTETAIQ) lie on the Cytoplasmic side of the membrane. The helical transmembrane segment at 280 to 303 (LMGIMCVLSVCWSPLLIMMLKMIF) threads the bilayer. Over 304 to 323 (NQTSVEHCKTDTGKQKECNF) the chain is Extracellular. A helical membrane pass occupies residues 324–345 (FLIAVRLASLNQILDPWVYLLL). Over 346 to 411 (RKILLRKFCQ…ADPGARPYQQ (66 aa)) the chain is Cytoplasmic. Residues 367-390 (IQRENRNVSHSGQHEEARDSEKSK) show a composition bias toward basic and acidic residues. Residues 367–392 (IQRENRNVSHSGQHEEARDSEKSKTI) form a disordered region.

The protein belongs to the G-protein coupled receptor 1 family. Interacts (via C-terminus) with MKLN1. In the kidney cortex and medulla, adrenal gland and stomach. In kidney, expression is higher in tubules in the outer medulla, with lower levels in cortex. In kidney cortex, expression is restricted to distal tubules.

Its subcellular location is the cell membrane. Functionally, receptor for prostaglandin E2 (PGE2). Required for normal development of fever in response to pyrinogens, including IL1B, prostaglandin E2 and bacterial lipopolysaccharide (LPS). Required for normal potentiation of platelet aggregation by prostaglandin E2, and thus plays a role in the regulation of blood coagulation. Required for increased HCO3(-) secretion in the duodenum in response to mucosal acidification, and thereby contributes to the protection of the mucosa against acid-induced ulceration. Not required for normal kidney function, normal urine volume and osmolality. This Oryctolagus cuniculus (Rabbit) protein is Prostaglandin E2 receptor EP3 subtype (PTGER3).